The chain runs to 556 residues: Formate--tetrahydrofolate ligase (556 aa).

Residue 64 to 71 (TPAGEGKT) participates in ATP binding.

It belongs to the formate--tetrahydrofolate ligase family.

It carries out the reaction (6S)-5,6,7,8-tetrahydrofolate + formate + ATP = (6R)-10-formyltetrahydrofolate + ADP + phosphate. Its pathway is one-carbon metabolism; tetrahydrofolate interconversion. This Actinobacillus pleuropneumoniae serotype 5b (strain L20) protein is Formate--tetrahydrofolate ligase.